Reading from the N-terminus, the 496-residue chain is Protein TOO MANY MOUTHS (496 aa).

An N-terminal signal peptide occupies residues 1-23 (MARYEFFRQIFIVLSIVSPLVRS). Residues 24–473 (FTVITSDSTA…ATDVSSTSKS (450 aa)) lie on the Extracellular side of the membrane. 10 LRR repeats span residues 158 to 182 (GSSL…LGNL), 183 to 208 (TNLK…RFSG), 210 to 228 (RSLD…GFVL), 229 to 252 (PALS…LTSC), 254 to 276 (SLIK…INRL), 277 to 300 (NQLV…LQGL), 302 to 325 (SLQA…AFKG), 326 to 350 (LKNL…LTRL), 351 to 373 (NSLR…EFRD), and 375 to 401 (KHLS…VWRM). N181 and N196 each carry an N-linked (GlcNAc...) asparagine glycan. A glycan (N-linked (GlcNAc...) asparagine) is linked at N362. The tract at residues 438 to 464 (AETSRPAPSGTVQHLSREEDGALPDGA) is disordered. A helical transmembrane segment spans residues 474 to 494 (LGFSYLSAFFLVFPNFIFMLI). At 495–496 (SS) the chain is on the cytoplasmic side.

This sequence belongs to the RLP family. As to quaternary structure, forms heterodimer with ERECTA or ERL1 through their extracellular domains. Not able to form homodimer. Interacts with EPF2 but not with EPF1. Interacts with SERK1, SERK2, SERK3/BAK1 and SERK4. Interacts with EPFL9/STOMAGEN. As to expression, in epidermal cells of developing shoots and leaves, but not in roots. Expressed in the stomatal cell lineage in the developing epidermis. Accumulates strongly in meristemoid mother cells (MMC) and meristemoids, somewhat less in meristemoid sister cells (stomatal-lineage ground cells, SLGC), and is barely detected in pavement cells.

Its subcellular location is the cell membrane. Its function is as follows. Promotes cell fate progression in stomatal development. In leaves, needed to correctly orient spacing divisions, to limit the number of asymmetric divisions in neighbor cells, and to promote the asymmetric (amplifying) divisions of meristemoids. In stems, promotes the conversion of meristemoids into guard mother cells (GMC). Positively regulates CAPRICE (CPC) expression in differentiating stomaless-forming cell files. Forms constitutive complexes with ERECTA and ERL1 involved in the recognition of the stomatal regulatory peptides EPF1, EPF2 and EPFL9/STOMAGEN. Modulates the activity of the ligand-receptor pairs EPF2-ERECTA and EPF1-ERL1 in stomatal development. Functions in a combinatorial specific manner with the ERECTA-family (ERf) receptor kinases in the regulation of the immune response. This Arabidopsis thaliana (Mouse-ear cress) protein is Protein TOO MANY MOUTHS.